We begin with the raw amino-acid sequence, 317 residues long: Methionyl-tRNA formyltransferase (317 aa).

A (6S)-5,6,7,8-tetrahydrofolate-binding site is contributed by 110–113 (SLLP).

Belongs to the Fmt family.

The catalysed reaction is L-methionyl-tRNA(fMet) + (6R)-10-formyltetrahydrofolate = N-formyl-L-methionyl-tRNA(fMet) + (6S)-5,6,7,8-tetrahydrofolate + H(+). Functionally, attaches a formyl group to the free amino group of methionyl-tRNA(fMet). The formyl group appears to play a dual role in the initiator identity of N-formylmethionyl-tRNA by promoting its recognition by IF2 and preventing the misappropriation of this tRNA by the elongation apparatus. This Bacillus pumilus (strain SAFR-032) protein is Methionyl-tRNA formyltransferase.